Consider the following 128-residue polypeptide: L-ectoine synthase (128 aa).

It belongs to the ectoine synthase family.

The catalysed reaction is (2S)-4-acetamido-2-aminobutanoate = L-ectoine + H2O. It participates in amine and polyamine biosynthesis; ectoine biosynthesis; L-ectoine from L-aspartate 4-semialdehyde: step 3/3. Catalyzes the circularization of gamma-N-acetyl-alpha,gamma-diaminobutyric acid (ADABA) to ectoine (1,4,5,6-tetrahydro-2-methyl-4-pyrimidine carboxylic acid), which is an excellent osmoprotectant. This chain is L-ectoine synthase, found in Vibrio parahaemolyticus serotype O3:K6 (strain RIMD 2210633).